The sequence spans 167 residues: Small ribosomal subunit protein uS5 (167 aa).

The S5 DRBM domain maps to 12-75; it reads LQEKLIAVNR…EKARRNMVTV (64 aa).

Belongs to the universal ribosomal protein uS5 family. Part of the 30S ribosomal subunit. Contacts proteins S4 and S8.

Functionally, with S4 and S12 plays an important role in translational accuracy. Located at the back of the 30S subunit body where it stabilizes the conformation of the head with respect to the body. The sequence is that of Small ribosomal subunit protein uS5 from Shewanella sp. (strain W3-18-1).